A 465-amino-acid chain; its full sequence is Ribulose bisphosphate carboxylase large chain (465 aa).

The residue at position 4 (Lys-4) is an N6,N6,N6-trimethyllysine. Substrate contacts are provided by Asn-113 and Thr-163. The Proton acceptor role is filled by Lys-165. Lys-167 provides a ligand contact to substrate. Lys-191, Asp-193, and Glu-194 together coordinate Mg(2+). N6-carboxylysine is present on Lys-191. His-284 acts as the Proton acceptor in catalysis. Positions 285, 317, and 369 each coordinate substrate.

It belongs to the RuBisCO large chain family. Type I subfamily. Heterohexadecamer of 8 large chains and 8 small chains; disulfide-linked. The disulfide link is formed within the large subunit homodimers. Mg(2+) serves as cofactor. In terms of processing, the disulfide bond which can form in the large chain dimeric partners within the hexadecamer appears to be associated with oxidative stress and protein turnover.

The protein localises to the plastid. The protein resides in the chloroplast. It carries out the reaction 2 (2R)-3-phosphoglycerate + 2 H(+) = D-ribulose 1,5-bisphosphate + CO2 + H2O. The enzyme catalyses D-ribulose 1,5-bisphosphate + O2 = 2-phosphoglycolate + (2R)-3-phosphoglycerate + 2 H(+). Its function is as follows. RuBisCO catalyzes two reactions: the carboxylation of D-ribulose 1,5-bisphosphate, the primary event in carbon dioxide fixation, as well as the oxidative fragmentation of the pentose substrate in the photorespiration process. Both reactions occur simultaneously and in competition at the same active site. In Platytheca verticillata, this protein is Ribulose bisphosphate carboxylase large chain.